The sequence spans 304 residues: Beta-lactamase-like protein str6 (304 aa).

This sequence belongs to the beta-lactamase family.

Its pathway is mycotoxin biosynthesis. Its function is as follows. Beta-lactamase-like protein; part of the gene cluster that mediates the biosynthesis of strobilurin A, an antifungal polyketide that contains a key beta-methoxyacrylate toxophore that targets the complex III of the mitochondrial electron transport chain. Strobilurin biosynthesis begins with construction of benzoyl CoA by step-wise elimination of ammonia from phenylalanine by the phenylalanine ammonia-lyase str11, oxygenation by str8 and retro-Claisen reaction to form benzoic acid, which is activated to its CoA thiolester benzoyl CoA by the dedicated CoA ligase str10. Benzoyl CoA forms the starter unit for the highly reducing polyketide synthase stpks1 that produces the polyketide prestrobilutin A. The FAD-dependent oxygenase str9 then catalyzes the key oxidative rearrangement responsible for the creation of the beta-methoxyacrylate toxophore. Str9 performs epoxidation of the 2,3 olefin of prestrobilutin A, followed by Meinwald rearrangement to furnish the aldehyde intermediate. Rapid enolization of the aldehyde intermediate would give the beta-methoxyacrylate skeleton and methylations catalyzed by str2 and str3 complete the synthesis and lead to the production of strobilurin A. The short-chain dehydrogenase stl2 and the dehydrogenase str4 play a role in the shunt pathway leading to the production of bolineol. The cluster encodes no obvious halogenase gene that could be involved in production of strobilurin B, nor any obvious dimethylallyl-transferase that could be involved in the production of strobilurin G. It is possible that unknown proteins encoded in, or near, the cluster (such as str1 or stl1) may form new classes of halogenases or dimethylally-transferases, or that the responsible genes are located elsewhere on the genome. Similarly, proteins encoded by str5/str6 hydrolases appear to have no chemical role in the biosynthesis of strobilurin A. Finally, no obvious self-resistance gene is found within the cluster. In Strobilurus tenacellus, this protein is Beta-lactamase-like protein str6.